The following is a 159-amino-acid chain: Large ribosomal subunit protein uL15 (159 aa).

The interval 1-39 is disordered; sequence MKLNELSPADGSTKKRMRVGRGVGSGKGKTAGRGVKGQN. Residues 21-35 are compositionally biased toward gly residues; it reads RGVGSGKGKTAGRGV.

This sequence belongs to the universal ribosomal protein uL15 family. In terms of assembly, part of the 50S ribosomal subunit.

In terms of biological role, binds to the 23S rRNA. In Hyphomonas neptunium (strain ATCC 15444), this protein is Large ribosomal subunit protein uL15.